The chain runs to 497 residues: L-carnitine dehydrogenase/betainyl-CoA thioesterase (497 aa).

The L-carnitine dehydrogenase stretch occupies residues 1–335 (MSFITKAACV…AKLWANARKP (335 aa)). 11-16 (GGGVIG) contributes to the NAD(+) binding site. An important for dehydrogenase activity region spans residues 330–335 (ANARKP). The betainyl-CoA thioesterase stretch occupies residues 336–497 (EADLGDVKPL…AGRFVGQKRA (162 aa)).

It in the N-terminal section; belongs to the 3-hydroxyacyl-CoA dehydrogenase family. L-carnitine dehydrogenase subfamily. In the C-terminal section; belongs to the betainyl-CoA thioesterase family. As to quaternary structure, homodimer.

The protein resides in the cytoplasm. It carries out the reaction carnitine + NAD(+) = 3-dehydrocarnitine + NADH + H(+). The enzyme catalyses N,N,N-trimethylglycyl-CoA + H2O = glycine betaine + CoA + H(+). It functions in the pathway amine and polyamine metabolism; carnitine metabolism. Its function is as follows. Catalyzes the NAD(+)-dependent oxidation of L-carnitine to 3-dehydrocarnitine. Probably also catalyzes the cleavage of betainyl-CoA (N,N,N-trimethylglycyl-CoA) into glycine betaine and coenzyme A. Despite a high similarity to 3-hydroxyacyl-CoA dehydrogenases, cannot dehydrogenate 3-hydroxybutylate and 3-hydroxybutyl-CoA. Is probably involved in a L-carnitine degradation pathway that allows Rhizobium sp. YS-240 to grow on L-carnitine as the sole source of carbon and nitrogen. This Rhizobium sp protein is L-carnitine dehydrogenase/betainyl-CoA thioesterase.